Here is an 86-residue protein sequence, read N- to C-terminus: Probable acyl carrier protein CCNA_01221 (86 aa).

The Carrier domain maps to 6 to 83 (TVTDLSLREI…DLSKLINDLR (78 aa)). At Ser-43 the chain carries O-(pantetheine 4'-phosphoryl)serine.

It belongs to the acyl carrier protein (ACP) family.

Its pathway is lipid metabolism; sphingolipid metabolism. Its function is as follows. Involved in de novo bacterial ceramide synthesis. The protein is Probable acyl carrier protein CCNA_01221 of Caulobacter vibrioides (strain NA1000 / CB15N) (Caulobacter crescentus).